The following is a 1418-amino-acid chain: ABC transporter G family member 38 (1418 aa).

The disordered stretch occupies residues 1-27 (MAHYRVSSEVENIMNRDRSHRKNEEED). An ABC transporter 1 domain is found at 147-419 (TKIRVLPDRK…FEFMGFKCPE (273 aa)). An ATP-binding site is contributed by 179–186 (GPPGSGKS). Positions 497-710 (ELLKACLERE…IQTAVSVNEF (214 aa)) constitute an ABC transmembrane type-2 1 domain. A run of 6 helical transmembrane segments spans residues 516–536 (TFVL…VVFW), 548–568 (GIIY…SGFF), 600–620 (IITF…TYFT), 634–654 (YLVL…IAAV), 659–679 (VVSN…SGYV), and 729–749 (FFVE…STIL). Residues 821–1073 (MTFENITYSV…QLIEYFEGIR (253 aa)) enclose the ABC transporter 2 domain. 866 to 873 (GVSGAGKT) contributes to the ATP binding site. The ABC transmembrane type-2 2 domain maps to 1146–1360 (SQFQACLWKQ…GLYGLTIAQY (215 aa)). Helical transmembrane passes span 1167–1187 (AVRF…FWSL), 1197–1217 (IFNS…QSAA), 1249–1269 (VIIE…IVYG), 1284–1304 (IFFT…VISV), 1310–1330 (IASI…GFTI), 1341–1361 (WFTY…AQYG), and 1387–1407 (FLWV…FIYA).

It belongs to the ABC transporter superfamily. ABCG family. PDR (TC 3.A.1.205) subfamily. In terms of tissue distribution, expressed in roots and siliques at low levels.

The protein localises to the membrane. In terms of biological role, may be a general defense protein. The protein is ABC transporter G family member 38 (ABCG38) of Arabidopsis thaliana (Mouse-ear cress).